Here is an 839-residue protein sequence, read N- to C-terminus: Mitochondrial escape protein 2 (839 aa).

The N-terminal 42 residues, 1 to 42 (MIQFSGRACLRQGWKCAAGVGLRCHGAHSSPPLHVPPFRRYT), are a transit peptide targeting the mitochondrion. Over 43–297 (ATYSRADETG…IRGWIVSHPR (255 aa)) the chain is Mitochondrial matrix. In terms of domain architecture, RRM spans 190–282 (SRIKVEFLPT…TLLKLSYERK (93 aa)). The helical transmembrane segment at 298-318 (IVIPIIAAVIAAITVIVFDPI) threads the bilayer. The Mitochondrial intermembrane segment spans residues 319–839 (RTFFIKIQIA…GLRRILQSKM (521 aa)). A coiled-coil region spans residues 769 to 838 (LRTLGQQIAM…VGLRRILQSK (70 aa)).

Belongs to the YME2 family.

It localises to the mitochondrion inner membrane. Its function is as follows. Plays a role in maintaining the mitochondrial genome and in controlling the mtDNA escape. Involved in the regulation of mtDNA nucleotide structure and number. May have a dispensable role in early maturation of pre-rRNA. This Coccidioides immitis (strain RS) (Valley fever fungus) protein is Mitochondrial escape protein 2 (YME2).